A 475-amino-acid chain; its full sequence is Ribulose bisphosphate carboxylase large chain (475 aa).

A propeptide spanning residues 1–2 (MS) is cleaved from the precursor. Residue P3 is modified to N-acetylproline. Residue K14 is modified to N6,N6,N6-trimethyllysine. Substrate-binding residues include N123 and T173. K175 (proton acceptor) is an active-site residue. K177 is a substrate binding site. Residues K201, D203, and E204 each coordinate Mg(2+). K201 is subject to N6-carboxylysine. H294 serves as the catalytic Proton acceptor. Substrate contacts are provided by R295, H327, and S379.

Belongs to the RuBisCO large chain family. Type I subfamily. As to quaternary structure, heterohexadecamer of 8 large chains and 8 small chains; disulfide-linked. The disulfide link is formed within the large subunit homodimers. Mg(2+) serves as cofactor. In terms of processing, the disulfide bond which can form in the large chain dimeric partners within the hexadecamer appears to be associated with oxidative stress and protein turnover.

The protein localises to the plastid. It is found in the chloroplast. It catalyses the reaction 2 (2R)-3-phosphoglycerate + 2 H(+) = D-ribulose 1,5-bisphosphate + CO2 + H2O. The enzyme catalyses D-ribulose 1,5-bisphosphate + O2 = 2-phosphoglycolate + (2R)-3-phosphoglycerate + 2 H(+). Its function is as follows. RuBisCO catalyzes two reactions: the carboxylation of D-ribulose 1,5-bisphosphate, the primary event in carbon dioxide fixation, as well as the oxidative fragmentation of the pentose substrate in the photorespiration process. Both reactions occur simultaneously and in competition at the same active site. This Eucalyptus globulus subsp. globulus (Tasmanian blue gum) protein is Ribulose bisphosphate carboxylase large chain.